Here is a 201-residue protein sequence, read N- to C-terminus: 3-isopropylmalate dehydratase small subunit (201 aa).

Belongs to the LeuD family. LeuD type 1 subfamily. As to quaternary structure, heterodimer of LeuC and LeuD.

The enzyme catalyses (2R,3S)-3-isopropylmalate = (2S)-2-isopropylmalate. The protein operates within amino-acid biosynthesis; L-leucine biosynthesis; L-leucine from 3-methyl-2-oxobutanoate: step 2/4. Functionally, catalyzes the isomerization between 2-isopropylmalate and 3-isopropylmalate, via the formation of 2-isopropylmaleate. This chain is 3-isopropylmalate dehydratase small subunit, found in Thermus thermophilus (strain ATCC BAA-163 / DSM 7039 / HB27).